Here is a 723-residue protein sequence, read N- to C-terminus: Pescadillo homolog (723 aa).

In terms of domain architecture, BRCT spans 380–497 (EAGSLFATFT…KLLRPDLYAP (118 aa)). Disordered stretches follow at residues 440 to 471 (RPQL…RVPG) and 501 to 723 (LPPH…LNKK). The stretch at 522 to 551 (LADQEEEGEAERAAEAEEYENDEQEESGEE) forms a coiled coil. 3 stretches are compositionally biased toward acidic residues: residues 537–550 (AEEY…ESGE), 588–600 (MAED…DDGD), and 608–622 (FDQD…EDEE). Composition is skewed to basic and acidic residues over residues 623-634 (EKARSQHQKELE), 670-681 (KKKEEEELERQK), and 700-709 (KKQDAEAEKL). Residues 656-723 (KKQQAPLAKK…RKIEQGLNKK (68 aa)) adopt a coiled-coil conformation. The span at 710 to 723 (RQKRRKIEQGLNKK) shows a compositional bias: basic residues.

Belongs to the pescadillo family. As to quaternary structure, component of the NOP7 complex, composed of ERB1, NOP7 and YTM1. The complex is held together by ERB1, which interacts with NOP7 via its N-terminal domain and with YTM1 via a high-affinity interaction between the seven-bladed beta-propeller domains of the 2 proteins. The NOP7 complex associates with the 66S pre-ribosome.

Its subcellular location is the nucleus. It is found in the nucleolus. The protein localises to the nucleoplasm. In terms of biological role, component of the NOP7 complex, which is required for maturation of the 25S and 5.8S ribosomal RNAs and formation of the 60S ribosome. This is Pescadillo homolog from Ajellomyces capsulatus (strain NAm1 / WU24) (Darling's disease fungus).